A 239-amino-acid polypeptide reads, in one-letter code: Phosphoribosylaminoimidazole-succinocarboxamide synthase (239 aa).

The protein belongs to the SAICAR synthetase family.

It catalyses the reaction 5-amino-1-(5-phospho-D-ribosyl)imidazole-4-carboxylate + L-aspartate + ATP = (2S)-2-[5-amino-1-(5-phospho-beta-D-ribosyl)imidazole-4-carboxamido]succinate + ADP + phosphate + 2 H(+). The protein operates within purine metabolism; IMP biosynthesis via de novo pathway; 5-amino-1-(5-phospho-D-ribosyl)imidazole-4-carboxamide from 5-amino-1-(5-phospho-D-ribosyl)imidazole-4-carboxylate: step 1/2. This is Phosphoribosylaminoimidazole-succinocarboxamide synthase from Bacillus cereus (strain G9842).